The following is a 137-amino-acid chain: uncharacterized protein (137 aa).

This is an uncharacterized protein from Mycoplasma genitalium (strain ATCC 33530 / DSM 19775 / NCTC 10195 / G37) (Mycoplasmoides genitalium).